The sequence spans 517 residues: MFS-type transporter avaJ (517 aa).

A compositionally biased stretch (basic and acidic residues) spans 1 to 12 (MTSPEHSEDERQ). The tract at residues 1 to 28 (MTSPEHSEDERQPLLTKPSGPDESQSGF) is disordered. Residues 40–60 (AMWLLPMYTLYAITAGSLIIP) form a helical membrane-spanning segment. N-linked (GlcNAc...) asparagine glycosylation is present at N63. The next 5 helical transmembrane spans lie at 103-123 (IYGT…LMGF), 131-151 (PILL…LAAL), 161-181 (WLLV…ATTA), 204-224 (AAFT…LSVF), and 230-250 (AYWL…LALP). A glycan (N-linked (GlcNAc...) asparagine) is linked at N265. 5 helical membrane-spanning segments follow: residues 299–319 (MYIV…LVPL), 338–358 (FLTG…PLFM), 391–411 (LLLQ…LGVI), 442–462 (VLLG…PSGM), and 476–496 (ALFA…MFIG). 2 N-linked (GlcNAc...) asparagine glycosylation sites follow: N497 and N512.

This sequence belongs to the major facilitator superfamily. TCR/Tet family.

The protein localises to the membrane. The protein operates within secondary metabolite biosynthesis. In terms of biological role, MFS-type transporter; part of the cluster that mediates the biosynthesis of a highly modified cyclo-arginine-tryptophan dipeptide (cRW). This chain is MFS-type transporter avaJ, found in Aspergillus versicolor.